Reading from the N-terminus, the 463-residue chain is Glycine--tRNA ligase (463 aa).

Substrate contacts are provided by Arg102 and Glu165. ATP contacts are provided by residues 197–199 (RNE), 207–212 (FRTREF), 284–285 (EL), and 328–331 (GLTR). Residue 212–216 (FEQME) coordinates substrate. 324–328 (EPAAG) is a substrate binding site.

The protein belongs to the class-II aminoacyl-tRNA synthetase family. As to quaternary structure, homodimer.

It localises to the cytoplasm. The enzyme catalyses tRNA(Gly) + glycine + ATP = glycyl-tRNA(Gly) + AMP + diphosphate. Catalyzes the attachment of glycine to tRNA(Gly). The sequence is that of Glycine--tRNA ligase from Mycobacterium bovis (strain ATCC BAA-935 / AF2122/97).